The sequence spans 164 residues: UPF0304 protein MS2240 (164 aa).

It belongs to the UPF0304 family.

This Mannheimia succiniciproducens (strain KCTC 0769BP / MBEL55E) protein is UPF0304 protein MS2240.